A 732-amino-acid polypeptide reads, in one-letter code: Ribosomal RNA large subunit methyltransferase K/L (732 aa).

The THUMP domain maps to 50–162 (MAYRICLWSR…RGRLLLGLDL (113 aa)). The disordered stretch occupies residues 396 to 424 (TERETSSEGDEPQGASGATSRPGPRNDGA).

This sequence belongs to the methyltransferase superfamily. RlmKL family.

Its subcellular location is the cytoplasm. The catalysed reaction is guanosine(2445) in 23S rRNA + S-adenosyl-L-methionine = N(2)-methylguanosine(2445) in 23S rRNA + S-adenosyl-L-homocysteine + H(+). It carries out the reaction guanosine(2069) in 23S rRNA + S-adenosyl-L-methionine = N(2)-methylguanosine(2069) in 23S rRNA + S-adenosyl-L-homocysteine + H(+). Its function is as follows. Specifically methylates the guanine in position 2445 (m2G2445) and the guanine in position 2069 (m7G2069) of 23S rRNA. This chain is Ribosomal RNA large subunit methyltransferase K/L, found in Chromohalobacter salexigens (strain ATCC BAA-138 / DSM 3043 / CIP 106854 / NCIMB 13768 / 1H11).